Reading from the N-terminus, the 632-residue chain is Biosynthetic arginine decarboxylase (632 aa).

Lys101 carries the post-translational modification N6-(pyridoxal phosphate)lysine. Substrate is bound at residue 281 to 291; that stretch reads FDVGGGLGVDY.

The protein belongs to the Orn/Lys/Arg decarboxylase class-II family. SpeA subfamily. Requires Mg(2+) as cofactor. Pyridoxal 5'-phosphate is required as a cofactor.

The catalysed reaction is L-arginine + H(+) = agmatine + CO2. It functions in the pathway amine and polyamine biosynthesis; agmatine biosynthesis; agmatine from L-arginine: step 1/1. Catalyzes the biosynthesis of agmatine from arginine. The protein is Biosynthetic arginine decarboxylase of Escherichia coli O157:H7 (strain EC4115 / EHEC).